Reading from the N-terminus, the 508-residue chain is Lysine--tRNA ligase (508 aa).

The Mg(2+) site is built by Glu418 and Glu425.

This sequence belongs to the class-II aminoacyl-tRNA synthetase family. In terms of assembly, homodimer. The cofactor is Mg(2+).

Its subcellular location is the cytoplasm. It carries out the reaction tRNA(Lys) + L-lysine + ATP = L-lysyl-tRNA(Lys) + AMP + diphosphate. The protein is Lysine--tRNA ligase of Burkholderia thailandensis (strain ATCC 700388 / DSM 13276 / CCUG 48851 / CIP 106301 / E264).